A 635-amino-acid polypeptide reads, in one-letter code: tRNA uridine 5-carboxymethylaminomethyl modification enzyme MnmG (635 aa).

Position 19 to 24 (19 to 24 (GAGHAG)) interacts with FAD. 280-294 (GPRYCPSIEDKIVRF) provides a ligand contact to NAD(+).

The protein belongs to the MnmG family. Homodimer. Heterotetramer of two MnmE and two MnmG subunits. FAD is required as a cofactor.

The protein localises to the cytoplasm. NAD-binding protein involved in the addition of a carboxymethylaminomethyl (cmnm) group at the wobble position (U34) of certain tRNAs, forming tRNA-cmnm(5)s(2)U34. The sequence is that of tRNA uridine 5-carboxymethylaminomethyl modification enzyme MnmG from Synechocystis sp. (strain ATCC 27184 / PCC 6803 / Kazusa).